A 264-amino-acid polypeptide reads, in one-letter code: Tryptophan synthase alpha chain (264 aa).

Active-site proton acceptor residues include Glu49 and Asp60.

It belongs to the TrpA family. Tetramer of two alpha and two beta chains.

It catalyses the reaction (1S,2R)-1-C-(indol-3-yl)glycerol 3-phosphate + L-serine = D-glyceraldehyde 3-phosphate + L-tryptophan + H2O. It participates in amino-acid biosynthesis; L-tryptophan biosynthesis; L-tryptophan from chorismate: step 5/5. The alpha subunit is responsible for the aldol cleavage of indoleglycerol phosphate to indole and glyceraldehyde 3-phosphate. In Lachnospira eligens (strain ATCC 27750 / DSM 3376 / VPI C15-48 / C15-B4) (Eubacterium eligens), this protein is Tryptophan synthase alpha chain.